Reading from the N-terminus, the 85-residue chain is MIVGVAYAKPTVQVWKHVDVPEGTSAREAIERSGLLAQFPEIDLEVNKVGIFGAICPLDRTLAEGDRVEIYRPIHPEAELLEKKR.

The protein belongs to the UPF0125 (RnfH) family.

The sequence is that of Protein RnfH from Cereibacter sphaeroides (strain ATCC 17029 / ATH 2.4.9) (Rhodobacter sphaeroides).